The chain runs to 25 residues: Large ribosomal subunit protein uL29 (25 aa).

This sequence belongs to the universal ribosomal protein uL29 family.

The chain is Large ribosomal subunit protein uL29 (rpmC) from Brevundimonas vesicularis (Pseudomonas vesicularis).